Reading from the N-terminus, the 536-residue chain is Caspase recruitment domain-containing protein 9 (536 aa).

Position 2 is a phosphoserine (S2). Zn(2+)-binding residues include D3, C10, and H73. The 93-residue stretch at 6–98 (NDDECWSTLE…QLYRKVTGKE (93 aa)) folds into the CARD domain. A linker region spans residues 99-116 (PARVFSMIIDASGESGLT). The stretch at 117–272 (QLLMTEVMKL…ELQVSVQEGK (156 aa)) forms a coiled coil. K125 participates in a covalent cross-link: Glycyl lysine isopeptide (Lys-Gly) (interchain with G-Cter in ubiquitin). T231 carries the phosphothreonine; by PKC/PRKCD modification. The residue at position 277 (S277) is a Phosphoserine. Residues 303–415 (SLRKDLRQAE…LLAAEGRLKQ (113 aa)) are a coiled coil. S424, S425, S431, S451, S461, S483, and S498 each carry phosphoserine. Residues 425 to 451 (SDLEDSSPRNSQELSLPQDLEEDAQLS) form a disordered region. The interval 476 to 536 (LTHGMGPSSS…GSDNTDTEGS (61 aa)) is disordered. Basic and acidic residues predominate over residues 487-502 (PPEKERRRLKESFENY). T531 and T533 each carry phosphothreonine; by CK2.

In terms of assembly, monomer. Homodimer; homodimerization is mediated by the CARD domain which forms an extensive interaction with the adjacent linker and coiled-coil regions; leads to an autoinhibited state. Homomultimer; polymerizes following activation, forming a nucleating helical template that seeds BCL10-filament formation via a CARD-CARD interaction. Interacts (via CARD domain) with BCL10 (via CARD domain); interaction takes place following CARD9 activation and polymerization, leading to the formation of a filamentous CBM complex assembly. Component of a CBM complex (CARD9-BCL10, MALT1), composed of CARD9, BCL10 and MALT1. Interacts with RASGRF1. Interacts with NOD2 (via NACHT domain); interaction is direct. Interacts with RIPK2. Interacts with VHL; without leading to protein degradation. Phosphorylated at Thr-231 by PRKCD downstream of C-type lectin receptors activation: phosphorylation promotes interaction with BCL10, followed by activation of NF-kappa-B and MAP kinase p38 pathways. Phosphorylated at Thr-531 and Thr-531 by CK2 following interaction with VHL, leading to inhibit the ability to activate NF-kappa-B. Post-translationally, ubiquitinated at Lys-125 via 'Lys-27'-linked ubiquitin by TRIM62 downstream of C-type lectin receptors activation; leading to CARD9 activation, followed by activation of NF-kappa-B and MAP kinase p38 pathways. Deubiquitinated at Lys-125 by USP15, inhibiting CARD9. Specifically expressed in myeloid cells. Not expressed in non-lymphoid organs.

The protein resides in the cytoplasm. With respect to regulation, maintained in an autoinhibited state via homodimerization in which the CARD domain forms an extensive interaction with the adjacent linker and coiled-coil regions. Activation downstream of C-type lectin receptors, by phosphorylation by PRKCD and/or ubiquitination by TRIM62, triggers disruption of the CARD domain-coiled coil interface, CARD9 homooligomerization and BCL10 recruitment, followed by activation of NF-kappa-B and MAP kinase p38 pathways. Zinc-binding inhibits activation by stabilizing the CARD ground-state conformation and restricting its capacity to form BCL10-nucleating filaments. Functionally, adapter protein that plays a key role in innate immune response against fungi by forming signaling complexes downstream of C-type lectin receptors. CARD9-mediated signals are essential for antifungal immunity against a subset of fungi from the phylum Ascomycota. Transduces signals in myeloid cells downstream of C-type lectin receptors CLEC7A (dectin-1), CLEC6A (dectin-2) and CLEC4E (Mincle), which detect pathogen-associated molecular pattern metabolites (PAMPs), such as fungal carbohydrates, and trigger CARD9 activation. Upon activation, CARD9 homooligomerizes to form a nucleating helical template that recruits BCL10 via CARD-CARD interaction, thereby promoting polymerization of BCL10 and subsequent recruitment of MALT1: this leads to activation of NF-kappa-B and MAP kinase p38 (MAPK11, MAPK12, MAPK13 and/or MAPK14) pathways which stimulate expression of genes encoding pro-inflammatory cytokines and chemokines. CARD9 signaling in antigen-presenting cells links innate sensing of fungi to the activation of adaptive immunity and provides a cytokine milieu that induces the development and subsequent of interleukin 17-producing T helper (Th17) cells. Also involved in activation of myeloid cells via classical ITAM-associated receptors and TLR: required for TLR-mediated activation of MAPK, while it is not required for TLR-induced activation of NF-kappa-B. CARD9 can also be engaged independently of BCL10: forms a complex with RASGRF1 downstream of C-type lectin receptors, which recruits and activates HRAS, leading to ERK activation and the production of cytokines. Acts as an important regulator of the intestinal commensal fungi (mycobiota) component of the gut microbiota. Plays an essential role in antifungal immunity against dissemination of gut fungi: acts by promoting induction of antifungal IgG antibodies response in CX3CR1(+) macrophages to confer protection against disseminated C.albicans or C.auris infection. Also mediates immunity against other pathogens, such as certain bacteria, viruses and parasites; CARD9 signaling is however redundant with other innate immune responses. In response to L.monocytogenes infection, required for the production of inflammatory cytokines activated by intracellular peptidoglycan: acts by connecting NOD2 recognition of peptidoglycan to downstream activation of MAP kinases (MAPK) without activating NF-kappa-B. The polypeptide is Caspase recruitment domain-containing protein 9 (Mus musculus (Mouse)).